Here is a 188-residue protein sequence, read N- to C-terminus: UPF0301 protein MCA2336 2 (188 aa).

Belongs to the UPF0301 (AlgH) family.

The sequence is that of UPF0301 protein MCA2336 2 from Methylococcus capsulatus (strain ATCC 33009 / NCIMB 11132 / Bath).